The sequence spans 151 residues: Small ribosomal subunit protein uS13 (151 aa).

It belongs to the universal ribosomal protein uS13 family. Part of the 30S ribosomal subunit. Forms a loose heterodimer with protein S19. Forms two bridges to the 50S subunit in the 70S ribosome.

Located at the top of the head of the 30S subunit, it contacts several helices of the 16S rRNA. In the 70S ribosome it contacts the 23S rRNA (bridge B1a) and protein L5 of the 50S subunit (bridge B1b), connecting the 2 subunits; these bridges are implicated in subunit movement. The sequence is that of Small ribosomal subunit protein uS13 from Staphylothermus marinus (strain ATCC 43588 / DSM 3639 / JCM 9404 / F1).